The sequence spans 372 residues: Flap endonuclease 1 (372 aa).

An N-domain region spans residues 1-105; it reads MGVKGLNQLI…GELEKRLLRR (105 aa). Asp34 provides a ligand contact to Mg(2+). Arg47 and Arg71 together coordinate DNA. Mg(2+) is bound by residues Asp87, Glu159, Glu161, Asp180, and Asp182. The interval 123 to 254 is I-domain; the sequence is EVLKFEKRLV…ATAFKLIKEH (132 aa). Residue Glu159 coordinates DNA. DNA-binding residues include Gly232 and Asp234. Position 234 (Asp234) interacts with Mg(2+). The tract at residues 339-347 is interaction with PCNA; the sequence is VQGRLDGFF.

Belongs to the XPG/RAD2 endonuclease family. FEN1 subfamily. Interacts with PCNA. Three molecules of RAD27 bind to one PCNA trimer with each molecule binding to one PCNA monomer. PCNA stimulates the nuclease activity without altering cleavage specificity. Mg(2+) is required as a cofactor. In terms of processing, phosphorylated. Phosphorylation upon DNA damage induces relocalization to the nuclear plasma.

The protein localises to the nucleus. Its subcellular location is the nucleolus. It localises to the nucleoplasm. The protein resides in the mitochondrion. In terms of biological role, structure-specific nuclease with 5'-flap endonuclease and 5'-3' exonuclease activities involved in DNA replication and repair. During DNA replication, cleaves the 5'-overhanging flap structure that is generated by displacement synthesis when DNA polymerase encounters the 5'-end of a downstream Okazaki fragment. It enters the flap from the 5'-end and then tracks to cleave the flap base, leaving a nick for ligation. Also involved in the long patch base excision repair (LP-BER) pathway, by cleaving within the apurinic/apyrimidinic (AP) site-terminated flap. Acts as a genome stabilization factor that prevents flaps from equilibrating into structures that lead to duplications and deletions. Also possesses 5'-3' exonuclease activity on nicked or gapped double-stranded DNA, and exhibits RNase H activity. Also involved in replication and repair of rDNA and in repairing mitochondrial DNA. The chain is Flap endonuclease 1 from Candida dubliniensis (strain CD36 / ATCC MYA-646 / CBS 7987 / NCPF 3949 / NRRL Y-17841) (Yeast).